Here is a 681-residue protein sequence, read N- to C-terminus: MIDRYKHQQLRIGSVSPQQISAWATKILPNGEIVGEVTKPYTFHYKTNKPEKDGLFCERIFGPIKSGICACGNYRVIGDEKEDPKFCEQCGVEFVDSRIRRYQMGYIKLACPVTHVWYLKRLPSYIANLLDKPLKELEGLVYCDFSFARPITKKPTFLRLRGLFEYEIQSWKYSIPLFFTTQGFDTFRNREISTGAGAIREQLADLDLRIIIENSLVEWEELGEEGHTGNEWEDRKVGRRKDFLVRRVELAKHFIRTNIEPEWMVLCLLPVLPPELRPIIQIDGGKLMSSDINELYRRVIYRNNTLTDLLTTSRSTPGELVMCQEKLVQEAVDTLLDNGIRGQPMRDGHNKVYKSFSDVIEGKEGRFRETLLGKRVDYSGRSVIVVGPSLSLHRCGLPREIAIELFQTFVIRGLIRQHLASNIGVAKSKIREKEPIVWEILQEVMQGHPVLLNRAPTLHRLGIQAFQPVLVEGRAICLHPLVCKGFNADFDGDQMAVHVPLSLEAQVEARLLMFSHMNLLSPAIGDPISVPTQDMLIGLYVLTSGNHRGICVNRYNPCNRRNYQNQKRSDNSHYKYTKEPFFSNSYDAIGAYRQKRINLDSPLWLRWRLDQRVIASRETPIEVHYESLGTFYEIYGHYLIVRSLKKQILFIYIRTTVGHIALYREIEEAIQGFSRAYSSGT.

The Zn(2+) site is built by Cys-69, Cys-71, Cys-87, and Cys-90. Asp-489, Asp-491, and Asp-493 together coordinate Mg(2+).

The protein belongs to the RNA polymerase beta' chain family. RpoC1 subfamily. In plastids the minimal PEP RNA polymerase catalytic core is composed of four subunits: alpha, beta, beta', and beta''. When a (nuclear-encoded) sigma factor is associated with the core the holoenzyme is formed, which can initiate transcription. It depends on Mg(2+) as a cofactor. Zn(2+) serves as cofactor.

It localises to the plastid. The protein localises to the chloroplast. The enzyme catalyses RNA(n) + a ribonucleoside 5'-triphosphate = RNA(n+1) + diphosphate. DNA-dependent RNA polymerase catalyzes the transcription of DNA into RNA using the four ribonucleoside triphosphates as substrates. The sequence is that of DNA-directed RNA polymerase subunit beta' from Nicotiana sylvestris (Wood tobacco).